The sequence spans 323 residues: Melanocortin receptor 3 (323 aa).

The Extracellular segment spans residues 1-37 (MNSSCCPSSSYPTLPNLSQHPAAPSASNRSGSGFCEQ). N-linked (GlcNAc...) asparagine glycosylation is found at Asn2, Asn16, and Asn28. Residues 38–63 (VFIKPEVFLALGIVSLMENILVILAV) form a helical membrane-spanning segment. At 64-75 (VRNGNLHSPMYF) the chain is on the cytoplasmic side. A helical transmembrane segment spans residues 76–100 (FLCSLAAADMLVSLSNSLETIMIVV). The Extracellular portion of the chain corresponds to 101 to 118 (INSDSLTLEDQFIQHMDN). The helical transmembrane segment at 119–140 (IFDSMICISLVASICNLLAIAV) threads the bilayer. Topologically, residues 141 to 160 (DRYVTIFYALRYHSIMTVRK) are cytoplasmic. The chain crosses the membrane as a helical span at residues 161–181 (ALSLIVAIWVCCGICGVMFIV). Residues 182-186 (YSESK) are Extracellular-facing. A helical transmembrane segment spans residues 187 to 210 (MVIVCLITMFFAMVLLMGTLYIHM). Residues 211-245 (FLFARLHVQRIAALPPADGVAPQQHSCMKGAVTIT) are Cytoplasmic-facing. A helical membrane pass occupies residues 246 to 268 (ILLGVFIFCWAPFFLHLVLIITC). The Extracellular segment spans residues 269–277 (PTNPYCICY). A helical membrane pass occupies residues 278–301 (TAHFNTYLVLIMCNSVIDPLIYAF). Residues 302-323 (RSLELRNTFKEILCGCNGMNVG) lie on the Cytoplasmic side of the membrane. Cys315 carries S-palmitoyl cysteine lipidation.

Belongs to the G-protein coupled receptor 1 family. As to expression, brain.

The protein localises to the cell membrane. Functionally, receptor for MSH (alpha, beta and gamma) and ACTH. This receptor is mediated by G proteins which activate adenylate cyclase. Required for expression of anticipatory patterns of activity and wakefulness during periods of limited nutrient availability and for the normal regulation of circadian clock activity in the brain. The protein is Melanocortin receptor 3 (Mc3r) of Rattus norvegicus (Rat).